A 191-amino-acid polypeptide reads, in one-letter code: Calcium-activated potassium channel subunit beta-1 (191 aa).

The Cytoplasmic segment spans residues 1–15 (MGKKLVMAQKRGETR). A helical membrane pass occupies residues 16 to 36 (ALCLGVAMVMCAVITYYILGT). Topologically, residues 37–157 (TMLPLYQKSV…YQRLYGPQAL (121 aa)) are extracellular. Residues Asn-80 and Asn-142 are each glycosylated (N-linked (GlcNAc...) asparagine). Residues 158–178 (LASLFWPTFLLTGGLLIIAMV) form a helical membrane-spanning segment. Residues 179 to 191 (KINRSLSILAAQK) lie on the Cytoplasmic side of the membrane.

This sequence belongs to the KCNMB (TC 8.A.14.1) family. KCNMB1 subfamily. As to quaternary structure, interacts with KCNMA1 tetramer. There are probably 4 molecules of KCMNB1 per KCNMA1 tetramer. In terms of processing, N-glycosylated.

The protein resides in the membrane. In terms of biological role, regulatory subunit of the calcium activated potassium KCNMA1 (maxiK) channel. Modulates the calcium sensitivity and gating kinetics of KCNMA1, thereby contributing to KCNMA1 channel diversity. Increases the apparent Ca(2+)/voltage sensitivity of the KCNMA1 channel. It also modifies KCNMA1 channel kinetics and alters its pharmacological properties. It slows down the activation and the deactivation kinetics of the channel. Acts as a negative regulator of smooth muscle contraction by enhancing the calcium sensitivity to KCNMA1. Its presence is also a requirement for internal binding of the KCNMA1 channel opener dehydrosoyasaponin I (DHS-1) triterpene glycoside and for external binding of the agonist hormone 17-beta-estradiol (E2). Increases the binding activity of charybdotoxin (CTX) toxin to KCNMA1 peptide blocker by increasing the CTX association rate and decreasing the dissociation rate. The polypeptide is Calcium-activated potassium channel subunit beta-1 (KCNMB1) (Oryctolagus cuniculus (Rabbit)).